The sequence spans 295 residues: Diaminopimelate epimerase (295 aa).

The substrate site is built by N11 and N78. The active-site Proton donor is C87. Residues 88–89 (GN), N163, N199, and 220–221 (ER) each bind substrate. C229 acts as the Proton acceptor in catalysis. Substrate is bound at residue 230–231 (GT).

This sequence belongs to the diaminopimelate epimerase family. As to quaternary structure, homodimer.

The protein resides in the cytoplasm. It catalyses the reaction (2S,6S)-2,6-diaminopimelate = meso-2,6-diaminopimelate. The protein operates within amino-acid biosynthesis; L-lysine biosynthesis via DAP pathway; DL-2,6-diaminopimelate from LL-2,6-diaminopimelate: step 1/1. Its function is as follows. Catalyzes the stereoinversion of LL-2,6-diaminopimelate (L,L-DAP) to meso-diaminopimelate (meso-DAP), a precursor of L-lysine and an essential component of the bacterial peptidoglycan. The chain is Diaminopimelate epimerase from Mycobacteroides abscessus (strain ATCC 19977 / DSM 44196 / CCUG 20993 / CIP 104536 / JCM 13569 / NCTC 13031 / TMC 1543 / L948) (Mycobacterium abscessus).